Consider the following 258-residue polypeptide: Imidazole glycerol phosphate synthase subunit HisF (258 aa).

Catalysis depends on residues Asp11 and Asp130.

This sequence belongs to the HisA/HisF family. Heterodimer of HisH and HisF.

It localises to the cytoplasm. The enzyme catalyses 5-[(5-phospho-1-deoxy-D-ribulos-1-ylimino)methylamino]-1-(5-phospho-beta-D-ribosyl)imidazole-4-carboxamide + L-glutamine = D-erythro-1-(imidazol-4-yl)glycerol 3-phosphate + 5-amino-1-(5-phospho-beta-D-ribosyl)imidazole-4-carboxamide + L-glutamate + H(+). The protein operates within amino-acid biosynthesis; L-histidine biosynthesis; L-histidine from 5-phospho-alpha-D-ribose 1-diphosphate: step 5/9. Functionally, IGPS catalyzes the conversion of PRFAR and glutamine to IGP, AICAR and glutamate. The HisF subunit catalyzes the cyclization activity that produces IGP and AICAR from PRFAR using the ammonia provided by the HisH subunit. In Yersinia pseudotuberculosis serotype O:3 (strain YPIII), this protein is Imidazole glycerol phosphate synthase subunit HisF.